Here is a 339-residue protein sequence, read N- to C-terminus: Fructose-1,6-bisphosphatase, cytosolic (339 aa).

Mg(2+) is bound by residues glutamate 71, glutamate 100, aspartate 121, leucine 123, and aspartate 124. Substrate is bound by residues 124 to 127 (DGSS), asparagine 215, tyrosine 247, tyrosine 267, and lysine 277. Glutamate 283 contributes to the Mg(2+) binding site.

The protein belongs to the FBPase class 1 family. The cofactor is Mg(2+).

The protein localises to the cytoplasm. The catalysed reaction is beta-D-fructose 1,6-bisphosphate + H2O = beta-D-fructose 6-phosphate + phosphate. This Oryza sativa subsp. indica (Rice) protein is Fructose-1,6-bisphosphatase, cytosolic.